A 46-amino-acid polypeptide reads, in one-letter code: DNA-directed RNA polymerase subunit Rpo12 (46 aa).

3 residues coordinate Zn(2+): cysteine 8, cysteine 23, and cysteine 26.

This sequence belongs to the archaeal Rpo12/eukaryotic RPC10 RNA polymerase subunit family. In terms of assembly, part of the RNA polymerase complex. It depends on Zn(2+) as a cofactor.

The protein localises to the cytoplasm. The catalysed reaction is RNA(n) + a ribonucleoside 5'-triphosphate = RNA(n+1) + diphosphate. Functionally, DNA-dependent RNA polymerase (RNAP) catalyzes the transcription of DNA into RNA using the four ribonucleoside triphosphates as substrates. In Archaeoglobus fulgidus (strain ATCC 49558 / DSM 4304 / JCM 9628 / NBRC 100126 / VC-16), this protein is DNA-directed RNA polymerase subunit Rpo12.